The following is a 235-amino-acid chain: 7-cyano-7-deazaguanine synthase (235 aa).

12–22 (FSGGQDSTTCL) serves as a coordination point for ATP. C200, C215, C218, and C221 together coordinate Zn(2+).

It belongs to the QueC family. It depends on Zn(2+) as a cofactor.

The enzyme catalyses 7-carboxy-7-deazaguanine + NH4(+) + ATP = 7-cyano-7-deazaguanine + ADP + phosphate + H2O + H(+). It functions in the pathway purine metabolism; 7-cyano-7-deazaguanine biosynthesis. In terms of biological role, catalyzes the ATP-dependent conversion of 7-carboxy-7-deazaguanine (CDG) to 7-cyano-7-deazaguanine (preQ(0)). The sequence is that of 7-cyano-7-deazaguanine synthase from Leptothrix cholodnii (strain ATCC 51168 / LMG 8142 / SP-6) (Leptothrix discophora (strain SP-6)).